A 450-amino-acid polypeptide reads, in one-letter code: Methylenetetrahydrofolate--tRNA-(uracil-5-)-methyltransferase TrmFO (450 aa).

9–14 is an FAD binding site; the sequence is GGGMAG.

The protein belongs to the MnmG family. TrmFO subfamily. Requires FAD as cofactor.

The protein resides in the cytoplasm. It catalyses the reaction uridine(54) in tRNA + (6R)-5,10-methylene-5,6,7,8-tetrahydrofolate + NADH + H(+) = 5-methyluridine(54) in tRNA + (6S)-5,6,7,8-tetrahydrofolate + NAD(+). The catalysed reaction is uridine(54) in tRNA + (6R)-5,10-methylene-5,6,7,8-tetrahydrofolate + NADPH + H(+) = 5-methyluridine(54) in tRNA + (6S)-5,6,7,8-tetrahydrofolate + NADP(+). Functionally, catalyzes the folate-dependent formation of 5-methyl-uridine at position 54 (M-5-U54) in all tRNAs. This chain is Methylenetetrahydrofolate--tRNA-(uracil-5-)-methyltransferase TrmFO, found in Roseobacter denitrificans (strain ATCC 33942 / OCh 114) (Erythrobacter sp. (strain OCh 114)).